Here is a 112-residue protein sequence, read N- to C-terminus: Cornifelin homolog (112 aa).

The protein belongs to the cornifelin family.

This is Cornifelin homolog (cnfn) from Danio rerio (Zebrafish).